A 780-amino-acid polypeptide reads, in one-letter code: B3 domain-containing transcription repressor VAL2 (780 aa).

The TF-B3 DNA-binding region spans 286-387; the sequence is FEKVLSASDA…KLVMGYRKAT (102 aa). The segment at 515 to 565 adopts a CW-type zinc-finger fold; that stretch reads TGEQEQWVQCDACGKWRQLPVDILLPPKWSCSDNLLDPGRSSCSAPDELSP. C524, C527, C545, and C557 together coordinate Zn(2+). Disordered regions lie at residues 577 to 608, 669 to 695, and 743 to 780; these read EFKRRRLASSNEKLNQSQDASALNSLGNAGIT, KRNKGEAGQASQQAQSQSECRDETEVE, and NTAGEQQSSDMVSTEHGSSSAAQETEKDTTNGAHDPVN. Polar residues predominate over residues 584–603; sequence ASSNEKLNQSQDASALNSLG. Low complexity predominate over residues 674-686; the sequence is EAGQASQQAQSQS. A compositionally biased stretch (polar residues) spans 743-765; that stretch reads NTAGEQQSSDMVSTEHGSSSAAQ.

Its subcellular location is the nucleus. In terms of biological role, transcriptional repressor of gene expression involved in embryonic pathways, such as LEC1, ABI3, and FUS3. Repressor of the sugar-inducible genes involved in the seed maturation program in seedlings. Plays an essential role in regulating the transition from seed maturation to seedling growth. Functionally redundant with VAL1/HSI2. This Arabidopsis thaliana (Mouse-ear cress) protein is B3 domain-containing transcription repressor VAL2 (VAL2).